A 735-amino-acid polypeptide reads, in one-letter code: Transcription initiation factor IIF subunit alpha (735 aa).

Disordered regions lie at residues 1–68 (MSRR…EYAE), 165–263 (EYKK…TANL), 297–323 (NEPEFEEGTMDPLADVAPDGGGRAKRG), 446–465 (KAVADQQAMDEDDRDDNSEV), 471–606 (EEFA…HKEP), and 631–674 (PEGE…EETP). Low complexity predominate over residues 33-54 (RMRMGQNGSNSSSPGVPNGDNS). Composition is skewed to basic and acidic residues over residues 59 to 68 (VKKDDPEYAE) and 165 to 174 (EYKKKAEQER). A compositionally biased stretch (polar residues) spans 175-219 (STPNSGGMNKSGTVSLNNTVKDGSQTPTVDSVTKDNTANGVNSSI). A Phosphoserine modification is found at S198. A Phosphothreonine modification is found at T200. Low complexity predominate over residues 220–238 (PTVTGSSVPPASPTTVSAV). The span at 239 to 263 (ESNGLSNGSTSAANGLDGNASTANL) shows a compositional bias: polar residues. Acidic residues-rich tracts occupy residues 453–465 (AMDEDDRDDNSEV) and 471–480 (EEFADDEEAP). Basic and acidic residues predominate over residues 487-500 (QENKESEQRIKKEM). A compositionally biased stretch (acidic residues) spans 513–522 (APSENEEDEL). Phosphoserine is present on S515. The segment covering 523–536 (FGEKKIDEDGERIK) has biased composition (basic and acidic residues). Phosphoserine occurs at positions 560, 562, and 571. The span at 564–583 (IENKENESPVKKEEDSDTLS) shows a compositional bias: basic and acidic residues. Positions 584 to 595 (KSKRSSPKKQQK) are enriched in basic residues. Residues 636–654 (NPQTTKAVDSSNNASNTVP) are compositionally biased toward polar residues. S655 is subject to Phosphoserine.

It belongs to the TFIIF alpha subunit family. As to quaternary structure, TFIIF is composed of three different subunits: TFG1/RAP74, TFG2/RAP30 and TAF14. In terms of processing, phosphorylated on Ser and other residues by TAF1 and casein kinase II-like kinases.

The protein resides in the nucleus. Its function is as follows. TFIIF is a general transcription initiation factor that binds to RNA polymerase II. Its functions include the recruitment of RNA polymerase II to the promoter bound DNA-TBP-TFIIB complex, decreasing the affinity of RNA polymerase II for non-specific DNA, allowing for the subsequent recruitment of TFIIE and TFIIH, and facilitating RNA polymerase II elongation. The chain is Transcription initiation factor IIF subunit alpha (TFG1) from Saccharomyces cerevisiae (strain ATCC 204508 / S288c) (Baker's yeast).